The sequence spans 589 residues: (E)-beta-ocimene synthase, chloroplastic (589 aa).

A chloroplast-targeting transit peptide spans 1-25 (MAAHNLCFNSAFVCNVHHQKTQHFP). Arg-302, Asp-339, Asp-343, Arg-480, and Asn-483 together coordinate (2E,6E)-farnesyl diphosphate. Asp-339 and Asp-343 together coordinate Mg(2+). Positions 339–343 (DDIYD) match the DDXXD motif motif. Positions 483, 487, and 491 each coordinate Mg(2+).

This sequence belongs to the terpene synthase family. Tpsb subfamily. It depends on Mg(2+) as a cofactor. The cofactor is Mn(2+). In terms of tissue distribution, expressed exclusively in flowers.

Its subcellular location is the plastid. It localises to the chloroplast. It catalyses the reaction (2E,6E)-farnesyl diphosphate = (3E,6E)-alpha-farnesene + diphosphate. It functions in the pathway secondary metabolite biosynthesis; terpenoid biosynthesis. In terms of biological role, predominantly involved in monoterpene (C10) biosynthesis. Using GPP as substrate, the major product is (E)-beta-ocimene with minor amounts of (Z)-beta-ocimene and myrcene. Using FPP as substrate, could also be able to synthesize in vitro sesquiterpenes (C15) with (E,E)-alpha-farnesene as the major product and with (Z,E)-alpha-farnesene and (E,E)-beta-farnesene as minor products. The chain is (E)-beta-ocimene synthase, chloroplastic (TPS02) from Arabidopsis thaliana (Mouse-ear cress).